Consider the following 146-residue polypeptide: Transcriptional regulator MraZ (146 aa).

SpoVT-AbrB domains follow at residues 9–55 (ASAL…PRPA) and 81–124 (AMDV…DVQR).

It belongs to the MraZ family. As to quaternary structure, forms oligomers.

The protein localises to the cytoplasm. Its subcellular location is the nucleoid. This chain is Transcriptional regulator MraZ, found in Methylibium petroleiphilum (strain ATCC BAA-1232 / LMG 22953 / PM1).